The sequence spans 432 residues: Ribosomal protein uS12 methylthiotransferase RimO (432 aa).

The 119-residue stretch at Asn4–His122 folds into the MTTase N-terminal domain. [4Fe-4S] cluster-binding residues include Cys13, Cys51, Cys85, Cys146, Cys150, and Cys153. Positions Thr132–Asp363 constitute a Radical SAM core domain. The TRAM domain occupies Ala366 to Asn432.

Belongs to the methylthiotransferase family. RimO subfamily. It depends on [4Fe-4S] cluster as a cofactor.

The protein localises to the cytoplasm. It carries out the reaction L-aspartate(89)-[ribosomal protein uS12]-hydrogen + (sulfur carrier)-SH + AH2 + 2 S-adenosyl-L-methionine = 3-methylsulfanyl-L-aspartate(89)-[ribosomal protein uS12]-hydrogen + (sulfur carrier)-H + 5'-deoxyadenosine + L-methionine + A + S-adenosyl-L-homocysteine + 2 H(+). In terms of biological role, catalyzes the methylthiolation of an aspartic acid residue of ribosomal protein uS12. The protein is Ribosomal protein uS12 methylthiotransferase RimO of Parabacteroides distasonis (strain ATCC 8503 / DSM 20701 / CIP 104284 / JCM 5825 / NCTC 11152).